Here is a 152-residue protein sequence, read N- to C-terminus: Deoxyuridine 5'-triphosphate nucleotidohydrolase (152 aa).

Substrate contacts are provided by residues 72–74 (RSG), asparagine 85, and 89–91 (TID).

This sequence belongs to the dUTPase family. Requires Mg(2+) as cofactor.

It catalyses the reaction dUTP + H2O = dUMP + diphosphate + H(+). The protein operates within pyrimidine metabolism; dUMP biosynthesis; dUMP from dCTP (dUTP route): step 2/2. Its function is as follows. This enzyme is involved in nucleotide metabolism: it produces dUMP, the immediate precursor of thymidine nucleotides and it decreases the intracellular concentration of dUTP so that uracil cannot be incorporated into DNA. This Rhodopseudomonas palustris (strain ATCC BAA-98 / CGA009) protein is Deoxyuridine 5'-triphosphate nucleotidohydrolase.